The chain runs to 63 residues: Metallothionein-1 (63 aa).

Repeats lie at residues 23–30 and 56–63; these read CGDKCECK.

The protein belongs to the metallothionein superfamily. Type 9 family.

The metallothioneins are involved in the cellular sequestration of toxic metal ions. This Candida glabrata (strain ATCC 2001 / BCRC 20586 / JCM 3761 / NBRC 0622 / NRRL Y-65 / CBS 138) (Yeast) protein is Metallothionein-1 (MT-I).